The primary structure comprises 313 residues: 2,3-dihydroxyphenylpropionate/2,3-dihydroxicinnamic acid 1,2-dioxygenase (313 aa).

His-115 serves as the catalytic Proton donor. The active-site Proton acceptor is the His-179.

This sequence belongs to the LigB/MhpB extradiol dioxygenase family. In terms of assembly, homotetramer. The cofactor is Fe(2+).

The catalysed reaction is 3-(2,3-dihydroxyphenyl)propanoate + O2 = (2Z,4E)-2-hydroxy-6-oxonona-2,4-dienedioate + H(+). The enzyme catalyses (2E)-3-(2,3-dihydroxyphenyl)prop-2-enoate + O2 = (2Z,4E,7E)-2-hydroxy-6-oxonona-2,4,7-trienedioate + H(+). The protein operates within aromatic compound metabolism; 3-phenylpropanoate degradation. Catalyzes the non-heme iron(II)-dependent oxidative cleavage of 2,3-dihydroxyphenylpropionic acid and 2,3-dihydroxicinnamic acid into 2-hydroxy-6-ketononadienedioate and 2-hydroxy-6-ketononatrienedioate, respectively. This Mycolicibacterium smegmatis (strain ATCC 700084 / mc(2)155) (Mycobacterium smegmatis) protein is 2,3-dihydroxyphenylpropionate/2,3-dihydroxicinnamic acid 1,2-dioxygenase.